We begin with the raw amino-acid sequence, 307 residues long: Protoheme IX farnesyltransferase (307 aa).

8 helical membrane-spanning segments follow: residues 32–52 (MGIVNSNTLTVFTGFWLALHF), 65–85 (FFTIVGSALIMAGVCCLNNYI), 108–128 (PGFALAFGLVILLLGFVFLLL), 131–151 (PMAVLISFIGAFTYVVLYTLW), 158–178 (LNTVVGSISGAVPPLIGWAAI), 186–206 (IAWMLFLIMFIWQIPHFLALA), 251–271 (LGITFMVIATLLNIGWIALGL), and 287–307 (FVYSLNYLTILFVSMIVVTFF).

This sequence belongs to the UbiA prenyltransferase family. Protoheme IX farnesyltransferase subfamily. Interacts with CtaA.

Its subcellular location is the cell membrane. The catalysed reaction is heme b + (2E,6E)-farnesyl diphosphate + H2O = Fe(II)-heme o + diphosphate. It functions in the pathway porphyrin-containing compound metabolism; heme O biosynthesis; heme O from protoheme: step 1/1. Converts heme B (protoheme IX) to heme O by substitution of the vinyl group on carbon 2 of heme B porphyrin ring with a hydroxyethyl farnesyl side group. This chain is Protoheme IX farnesyltransferase, found in Bacillus mycoides (strain KBAB4) (Bacillus weihenstephanensis).